Here is a 95-residue protein sequence, read N- to C-terminus: Co-chaperonin GroES (95 aa).

This sequence belongs to the GroES chaperonin family. In terms of assembly, heptamer of 7 subunits arranged in a ring. Interacts with the chaperonin GroEL.

It localises to the cytoplasm. Together with the chaperonin GroEL, plays an essential role in assisting protein folding. The GroEL-GroES system forms a nano-cage that allows encapsulation of the non-native substrate proteins and provides a physical environment optimized to promote and accelerate protein folding. GroES binds to the apical surface of the GroEL ring, thereby capping the opening of the GroEL channel. The protein is Co-chaperonin GroES of Rickettsia conorii (strain ATCC VR-613 / Malish 7).